We begin with the raw amino-acid sequence, 383 residues long: Proton extrusion protein PxcA (383 aa).

4 helical membrane passes run 163–183 (ILLL…AYII), 258–278 (AVKN…VCFA), 306–326 (IILF…TVLL), and 341–361 (FVML…KYWI).

This sequence belongs to the CemA family.

It localises to the cell inner membrane. In terms of biological role, required for H(+) efflux immediately after light irradiation to form a rapid H(+) concentration gradient across the thylakoid membranes. Together with PxcL, contributes to transient H(+) uptake following dark to light transition. The polypeptide is Proton extrusion protein PxcA (Synechococcus sp. (strain CC9902)).